Reading from the N-terminus, the 383-residue chain is Outer membrane protein assembly factor BamB (383 aa).

Positions 1–23 are cleaved as a signal peptide; that stretch reads MMLLKRCNRRALVALAAVLLLAA. C24 carries N-palmitoyl cysteine lipidation. The S-diacylglycerol cysteine moiety is linked to residue C24.

The protein belongs to the BamB family. In terms of assembly, part of the Bam complex.

The protein localises to the cell outer membrane. Part of the outer membrane protein assembly complex, which is involved in assembly and insertion of beta-barrel proteins into the outer membrane. The protein is Outer membrane protein assembly factor BamB of Alkalilimnicola ehrlichii (strain ATCC BAA-1101 / DSM 17681 / MLHE-1).